A 599-amino-acid chain; its full sequence is Growth factor receptor-bound protein 10 (599 aa).

A compositionally biased stretch (polar residues) spans 1–23 (MNNDINSSVESLNSACNMQSDTD). The interval 1-122 (MNNDINSSVE…QPPAKHFPPG (122 aa)) is disordered. The segment covering 32-43 (QSASNQPSASSS) has biased composition (low complexity). The segment covering 44–61 (RGQPQASPRQKMQRSQPV) has biased composition (polar residues). S50 carries the post-translational modification Phosphoserine. Positions 97–118 (GSPPSVAPSSLPPPPSQPPAKH) are enriched in pro residues. Residue S98 is modified to Phosphoserine; by MTOR, MAPK1 and MAPK3. The Ras-associating domain maps to 171–255 (LRKDVKVFSE…SKFLFRKNYA (85 aa)). One can recognise a PH domain in the interval 295 to 404 (CPEIQGFLQV…WMTAFRLLKY (110 aa)). S433 carries the post-translational modification Phosphoserine; by MTOR and PKB/AKT1. S436 carries the post-translational modification Phosphoserine. Position 481 is a phosphoserine; by MTOR, MAPK1 and MAPK3 (S481). The 97-residue stretch at 498 to 594 (WFHGRISREE…VLPCKLKHHC (97 aa)) folds into the SH2 domain.

This sequence belongs to the GRB7/10/14 family. As to quaternary structure, interacts with ligand-activated tyrosine kinase receptors, including FGFR1, INSR, IGF1R, MET and PDGFRB in a phosphotyrosine-dependent manner through the SH2 domain. Poorly binds to the EGFR. Directly interacts with MAP3K14/NIK and is recruited to the EGFR-ERBB2 complex. Interacts with GIGYF1/PERQ1 and GIGYF2/TNRC15. When unphosphorylated, interacts with AKT1 and when phosphorylated with YWHAE/14-3-3 epsilon. Interacts with NEDD4. Interacts with LRP6, thus interfering with the binding of AXIN1 to LRP6. Binds relatively non-specifically to several phosphoinositides, including PI(5)P, PI(4,5)P2, PI(3,4)P2 and PI(3,4,5)P3, with modest affinities through the PH domain. Binds to activated NRAS. In terms of processing, phosphorylated on serine residues upon EGF, FGF and PDGF stimulation.

The protein localises to the cytoplasm. Its activity is regulated as follows. Phosphorylation by mTORC1 stabilizes and activates GRB10 constituting a feedback pathway by which mTORC1 inhibits INSR-dependent signaling. In terms of biological role, adapter protein which modulates coupling of a number of cell surface receptor kinases with specific signaling pathways. Binds to, and suppress signals from, activated receptors tyrosine kinases, including the insulin (INSR) and insulin-like growth factor (IGF1R) receptors. The inhibitory effect can be achieved by 2 mechanisms: interference with the signaling pathway and increased receptor degradation. Delays and reduces AKT1 phosphorylation in response to insulin stimulation. Blocks association between INSR and IRS1 and IRS2 and prevents insulin-stimulated IRS1 and IRS2 tyrosine phosphorylation. Recruits NEDD4 to IGF1R, leading to IGF1R ubiquitination, increased internalization and degradation by both the proteasomal and lysosomal pathways. A similar role in the mediation of ubiquitination also has been suggested with INSR. Negatively regulates Wnt signaling by interacting with LRP6 intracellular portion and interfering with the binding of AXIN1 to LRP6. Positive regulator of the KDR/VEGFR-2 signaling pathway. May inhibit NEDD4-mediated degradation of KDR/VEGFR-2. This chain is Growth factor receptor-bound protein 10 (Grb10), found in Rattus norvegicus (Rat).